Reading from the N-terminus, the 103-residue chain is UPF0145 protein BC_1816 (103 aa).

It belongs to the UPF0145 family.

This chain is UPF0145 protein BC_1816, found in Bacillus cereus (strain ATCC 14579 / DSM 31 / CCUG 7414 / JCM 2152 / NBRC 15305 / NCIMB 9373 / NCTC 2599 / NRRL B-3711).